Consider the following 184-residue polypeptide: MKNLTDSFVYLGHWPSAGSFGFNTDILATNPINLSVVFGVLIFFGKGVLNDLLDNRKQRILNTIRNSEELRERAIQQLENARARLRKVETEADQFRVNGYSEIEREKLNLINSTYRTLKQLENYKNETILFEQQRTINQVRERVFQQALQGAIGTLNSCLSNELHLSTINANIGMFGTMKEITD.

Residues Leu-27 to Leu-49 form a helical membrane-spanning segment.

The protein belongs to the ATPase B chain family. F-type ATPases have 2 components, F(1) - the catalytic core - and F(0) - the membrane proton channel. F(1) has five subunits: alpha(3), beta(3), gamma(1), delta(1), epsilon(1). F(0) has four main subunits: a(1), b(1), b'(1) and c(10-14). The alpha and beta chains form an alternating ring which encloses part of the gamma chain. F(1) is attached to F(0) by a central stalk formed by the gamma and epsilon chains, while a peripheral stalk is formed by the delta, b and b' chains.

The protein localises to the plastid. It is found in the chloroplast thylakoid membrane. In terms of biological role, f(1)F(0) ATP synthase produces ATP from ADP in the presence of a proton or sodium gradient. F-type ATPases consist of two structural domains, F(1) containing the extramembraneous catalytic core and F(0) containing the membrane proton channel, linked together by a central stalk and a peripheral stalk. During catalysis, ATP synthesis in the catalytic domain of F(1) is coupled via a rotary mechanism of the central stalk subunits to proton translocation. Component of the F(0) channel, it forms part of the peripheral stalk, linking F(1) to F(0). This Draba nemorosa (Woodland whitlowgrass) protein is ATP synthase subunit b, chloroplastic.